The primary structure comprises 243 residues: UPF0688 protein C1orf174 (243 aa).

2 disordered regions span residues 78–100 (NDSA…AEGS) and 132–243 (LAKT…DAEM). The span at 145 to 157 (SAGSGAEESNSSS) shows a compositional bias: low complexity. Phosphoserine occurs at positions 148 and 189. The span at 233-243 (DDDDDDDDAEM) shows a compositional bias: acidic residues.

Belongs to the UPF0688 family.

The protein localises to the nucleus. This Homo sapiens (Human) protein is UPF0688 protein C1orf174 (C1orf174).